A 409-amino-acid chain; its full sequence is Peptidase T (409 aa).

Histidine 78 provides a ligand contact to Zn(2+). Residue aspartate 80 is part of the active site. Position 140 (aspartate 140) interacts with Zn(2+). Glutamate 174 functions as the Proton acceptor in the catalytic mechanism. Residues glutamate 175, aspartate 197, and histidine 379 each coordinate Zn(2+).

It belongs to the peptidase M20B family. Requires Zn(2+) as cofactor.

It is found in the cytoplasm. It catalyses the reaction Release of the N-terminal residue from a tripeptide.. Functionally, cleaves the N-terminal amino acid of tripeptides. The chain is Peptidase T from Aliivibrio fischeri (strain ATCC 700601 / ES114) (Vibrio fischeri).